A 266-amino-acid polypeptide reads, in one-letter code: ATG8-interacting protein 2 (266 aa).

The AIM (Atg8-family-interacting motif) motif lies at 14–17 (WEVV). Residues 191-210 (TNTVWSICIAAAVMGIVILG) traverse the membrane as a helical segment. Positions 218-221 (WQIL) match the AIM (Atg8-family-interacting motif) motif.

Interacts with ATG8F.

Its subcellular location is the endoplasmic reticulum membrane. The protein resides in the membrane. Its function is as follows. May be involved in salt stress-induced vesicle-to-vacuole trafficking pathway. Through its interaction with ATG8F, may enable delivery of the vesicle bodies to the vacuole by an autophagic pathway. Plays a role in seed germination in response to exogenous abscisic acid (ABA) treatment. The chain is ATG8-interacting protein 2 from Arabidopsis thaliana (Mouse-ear cress).